A 645-amino-acid chain; its full sequence is Acetyl-coenzyme A synthetase (645 aa).

Residues 190 to 193 (RGGR) and threonine 308 each bind CoA. ATP contacts are provided by residues 384–386 (GEP), 408–413 (DTWWQT), aspartate 497, and arginine 512. Residue serine 520 participates in CoA binding. An ATP-binding site is contributed by arginine 523. Mg(2+) contacts are provided by valine 534, histidine 536, and valine 539. Lysine 606 is modified (N6-acetyllysine).

It belongs to the ATP-dependent AMP-binding enzyme family. The cofactor is Mg(2+). In terms of processing, acetylated. Deacetylation by the SIR2-homolog deacetylase activates the enzyme.

It catalyses the reaction acetate + ATP + CoA = acetyl-CoA + AMP + diphosphate. In terms of biological role, catalyzes the conversion of acetate into acetyl-CoA (AcCoA), an essential intermediate at the junction of anabolic and catabolic pathways. AcsA undergoes a two-step reaction. In the first half reaction, AcsA combines acetate with ATP to form acetyl-adenylate (AcAMP) intermediate. In the second half reaction, it can then transfer the acetyl group from AcAMP to the sulfhydryl group of CoA, forming the product AcCoA. In Halorhodospira halophila (strain DSM 244 / SL1) (Ectothiorhodospira halophila (strain DSM 244 / SL1)), this protein is Acetyl-coenzyme A synthetase.